The following is an 85-amino-acid chain: UPF0291 protein SPH_1589 (85 aa).

The segment at Thr-62–Ser-85 is disordered.

Belongs to the UPF0291 family.

The protein resides in the cytoplasm. The polypeptide is UPF0291 protein SPH_1589 (Streptococcus pneumoniae (strain Hungary19A-6)).